Reading from the N-terminus, the 216-residue chain is 3-isopropylmalate dehydratase small subunit (216 aa).

It belongs to the LeuD family. LeuD type 1 subfamily. As to quaternary structure, heterodimer of LeuC and LeuD.

The catalysed reaction is (2R,3S)-3-isopropylmalate = (2S)-2-isopropylmalate. It participates in amino-acid biosynthesis; L-leucine biosynthesis; L-leucine from 3-methyl-2-oxobutanoate: step 2/4. In terms of biological role, catalyzes the isomerization between 2-isopropylmalate and 3-isopropylmalate, via the formation of 2-isopropylmaleate. In Acinetobacter baylyi (strain ATCC 33305 / BD413 / ADP1), this protein is 3-isopropylmalate dehydratase small subunit.